The chain runs to 266 residues: Hemin import ATP-binding protein HmuV (266 aa).

Residues 12–248 form the ABC transporter domain; sequence LEASHLHYHV…ETLTQWYQAD (237 aa). Residue 44–51 coordinates ATP; that stretch reads GPNGAGKS.

This sequence belongs to the ABC transporter superfamily. Heme (hemin) importer (TC 3.A.1.14.5) family. In terms of assembly, the complex is composed of two ATP-binding proteins (HmuV), two transmembrane proteins (HmuU) and a solute-binding protein (HmuT).

Its subcellular location is the cell inner membrane. Its function is as follows. Part of the ABC transporter complex HmuTUV involved in hemin import. Responsible for energy coupling to the transport system. This is Hemin import ATP-binding protein HmuV from Yersinia pestis bv. Antiqua (strain Antiqua).